The following is a 142-amino-acid chain: Large ribosomal subunit protein uL11 (142 aa).

It belongs to the universal ribosomal protein uL11 family. In terms of assembly, part of the ribosomal stalk of the 50S ribosomal subunit. Interacts with L10 and the large rRNA to form the base of the stalk. L10 forms an elongated spine to which L12 dimers bind in a sequential fashion forming a multimeric L10(L12)X complex. One or more lysine residues are methylated.

Forms part of the ribosomal stalk which helps the ribosome interact with GTP-bound translation factors. The chain is Large ribosomal subunit protein uL11 from Klebsiella pneumoniae subsp. pneumoniae (strain ATCC 700721 / MGH 78578).